We begin with the raw amino-acid sequence, 787 residues long: Serine/threonine-protein kinase SCH9 (787 aa).

Disordered regions lie at residues methionine 1–threonine 82, proline 132–glutamine 172, and serine 238–glutamine 280. Positions proline 132 to glutamine 155 are enriched in low complexity. 2 stretches are compositionally biased toward polar residues: residues asparagine 156–glutamine 172 and proline 239–glycine 263. A C2 domain is found at aspartate 182 to leucine 354. Residues phenylalanine 392–phenylalanine 653 form the Protein kinase domain. Residues leucine 398–valine 406 and lysine 421 each bind ATP. Aspartate 518 functions as the Proton acceptor in the catalytic mechanism. The AGC-kinase C-terminal domain occupies alanine 654 to phenylalanine 729.

It belongs to the protein kinase superfamily. AGC Ser/Thr protein kinase family. cAMP subfamily.

It catalyses the reaction L-seryl-[protein] + ATP = O-phospho-L-seryl-[protein] + ADP + H(+). The enzyme catalyses L-threonyl-[protein] + ATP = O-phospho-L-threonyl-[protein] + ADP + H(+). Functionally, protein kinase that is part of growth control pathway which is at least partially redundant with the cAMP pathway. Plays a role in filamentous growth and virulence. Prevents hypha formation specifically under hypoxia at high CO(2) levels. Required for chlamydospore formation, distinctive morphological feature of the fungal pathogen C.albicans that can be induced to form in oxygen-limited environments and has been reported in clinical specimens. This chain is Serine/threonine-protein kinase SCH9 (SCH9), found in Candida albicans (strain SC5314 / ATCC MYA-2876) (Yeast).